The chain runs to 272 residues: Plastid division protein PDV1 (272 aa).

Topologically, residues 1–206 are cytoplasmic; the sequence is MGEMEIEEIE…KRALGFNHVK (206 aa). A disordered region spans residues 40 to 61; sequence KPSNRSEKRKNPHGNSGEDKRP. Residues 78–102 adopt a coiled-coil conformation; it reads IQEAKSLNAIRTALENLEDQLEFFH. Residues 207–225 form a helical membrane-spanning segment; the sequence is GVLGNAAIFAISVVAMLHL. Topologically, residues 226 to 272 are chloroplast intermembrane; it reads HQVATSEHHLQKKEDRFYRSQQRKTYGRDKSSADRSLDHLDVMMARG.

As to quaternary structure, interacts (via C-terminus) with CDP1/PARC6 (via C-terminus). Interacts with ARC5/DRP5B. In terms of tissue distribution, expressed in young developing leaves, root tips, shoot apices, and flower buds (sepals, petals, stamens, and pistils), but not in developed tissues.

The protein resides in the plastid. Its subcellular location is the chloroplast outer membrane. Functionally, component of the plastid division machinery. Required to mediate the dissociation of ARC5/DRP5B from plastid outer envelope membranes (OEMs) at the midplastid constriction site in the cytoplasm, thus triggering ARC5/DRP5B ring turnover at the chloroplast division site. Binding to phosphatidylinositol 4-phosphate (PI4P) modulates negatively chloroplast division. This Arabidopsis thaliana (Mouse-ear cress) protein is Plastid division protein PDV1.